The chain runs to 110 residues: MPGAGLFIFVAAALCEIGGCFAFWAWLRLGKSPLWAVGGVGLLILFAWLLTRVDSAAAGRAFAAYGGIYICASLGWMWAVEGGRPDRWDLIGVLLCAVGSAVILLGPRTA.

Transmembrane regions (helical) follow at residues 6–26 (LFIF…FWAW), 29–49 (LGKS…FAWL), 61–81 (AFAA…WAVE), and 90–110 (LIGV…PRTA).

The protein belongs to the UPF0060 family.

It localises to the cell inner membrane. The chain is UPF0060 membrane protein Swit_0423 from Rhizorhabdus wittichii (strain DSM 6014 / CCUG 31198 / JCM 15750 / NBRC 105917 / EY 4224 / RW1) (Sphingomonas wittichii).